We begin with the raw amino-acid sequence, 342 residues long: Transmembrane protein 59-like (342 aa).

Residues 1–24 (MAAVALMPPPLLLLLLLASPPAAS) form the signal peptide. A glycan (N-linked (GlcNAc...) asparagine) is linked at asparagine 97. The chain crosses the membrane as a helical span at residues 268–290 (WILACCLFLSVLVMLWLSCSTLV). The Microbody targeting signal signature appears at 340 to 342 (TKL).

This sequence belongs to the TMEM59 family. Expressed preferentially at high level in the brain.

Its subcellular location is the golgi apparatus membrane. Its function is as follows. Modulates the O-glycosylation and complex N-glycosylation steps occurring during the Golgi maturation of APP. Inhibits APP transport to the cell surface and further shedding. This is Transmembrane protein 59-like (TMEM59L) from Homo sapiens (Human).